The sequence spans 132 residues: Small ribosomal subunit protein uS11 (132 aa).

The protein belongs to the universal ribosomal protein uS11 family. As to quaternary structure, part of the 30S ribosomal subunit. Interacts with proteins S7 and S18. Binds to IF-3.

In terms of biological role, located on the platform of the 30S subunit, it bridges several disparate RNA helices of the 16S rRNA. Forms part of the Shine-Dalgarno cleft in the 70S ribosome. The chain is Small ribosomal subunit protein uS11 from Legionella pneumophila (strain Corby).